A 1145-amino-acid chain; its full sequence is Nucleolar protein 6 (1145 aa).

The disordered stretch occupies residues M1–A46.

This sequence belongs to the NRAP family. Part of the small subunit (SSU) processome, composed of more than 70 proteins and the RNA chaperone small nucleolar RNA (snoRNA) U3.

The protein resides in the nucleus. It is found in the nucleolus. It localises to the chromosome. Functionally, part of the small subunit (SSU) processome, first precursor of the small eukaryotic ribosomal subunit. During the assembly of the SSU processome in the nucleolus, many ribosome biogenesis factors, an RNA chaperone and ribosomal proteins associate with the nascent pre-rRNA and work in concert to generate RNA folding, modifications, rearrangements and cleavage as well as targeted degradation of pre-ribosomal RNA by the RNA exosome. The sequence is that of Nucleolar protein 6 (nol6) from Xenopus tropicalis (Western clawed frog).